The primary structure comprises 525 residues: Probable CoA ligase CCL9 (525 aa).

Residues 171–179, 311–316, Asp395, 407–410, and Lys501 each bind ATP; these read TSGTTSRPK, EAYAMT, and LVGR. Residues 242 to 311 are SBD1; that stretch reads SASTFWSDMI…EESFGAPVLE (70 aa). The tract at residues 312–375 is SBD2; the sequence is AYAMTEAAHL…IRGPNVTKGY (64 aa).

Belongs to the ATP-dependent AMP-binding enzyme family.

The protein resides in the cytoplasm. It localises to the cytosol. The polypeptide is Probable CoA ligase CCL9 (Humulus lupulus (European hop)).